A 364-amino-acid chain; its full sequence is MSTPSSLQALTKKVLATQHISKEYSQSREYCHILKCCGLWWHGGPIMLSTNEDNQMMIKSASFKDGLELNVALMKAVQENNRGLIELFIEWGADINFGLITVNTENIRSLCRELGAKESLNKWEVLDVFYTVKRFKSSNNIILCHELLSNNPLFLSEDNVQLRRIINYNLRRISINFILDEISFNEKLTRFWYSQAVLYNLTEAIQYFYQKYKHFKDWRLICGLAYNNVFDLHELYNKEKVGMDINQMMELACIYRYNYSTIYYCFMMGADINQAMITSVIKSYICNLFFCIDLGATAFEECLEIAKQQNDIESIKILIYKNYYSPDSSLISLKITDPEKINILLDDETYESKNELIYEESHRY.

It belongs to the asfivirus MGF 360 family.

Plays a role in virus cell tropism, and may be required for efficient virus replication in macrophages. The chain is Protein MGF 360-1L from Ornithodoros (relapsing fever ticks).